Reading from the N-terminus, the 204-residue chain is Large ribosomal subunit protein eL15 (204 aa).

The protein belongs to the eukaryotic ribosomal protein eL15 family. Component of the large ribosomal subunit.

It is found in the cytoplasm. Its function is as follows. Component of the large ribosomal subunit. The ribosome is a large ribonucleoprotein complex responsible for the synthesis of proteins in the cell. The protein is Large ribosomal subunit protein eL15 (rpl15) of Anguilla japonica (Japanese eel).